Here is a 752-residue protein sequence, read N- to C-terminus: Glutamate carboxypeptidase 2 (752 aa).

At 1-22 (MWNALQDRDSAEVLGHRQRWLR) the chain is on the cytoplasmic side. Ser10 carries the post-translational modification Phosphoserine. Residues 23–44 (VGTLVLALTGTFLIGFLFGWFI) traverse the membrane as a helical; Signal-anchor for type II membrane protein segment. The Extracellular portion of the chain corresponds to 45–752 (KPSNEATGNV…AAAETLREVA (708 aa)). N-linked (GlcNAc...) asparagine glycans are attached at residues Asn78, Asn123, and Asn155. Substrate contacts are provided by Arg212 and Asn259. Ca(2+) is bound by residues Thr271 and Tyr274. Residues 276–589 (ANEHAYRHEL…QVRGAMVFEL (314 aa)) form an NAALADase region. Asn338 carries an N-linked (GlcNAc...) asparagine glycan. His379 and Asp389 together coordinate Zn(2+). Residue Glu426 coordinates substrate. The active-site Nucleophile; for NAALADase activity is the Glu426. Glu427 is a binding site for Zn(2+). Positions 435 and 438 each coordinate Ca(2+). Zn(2+) is bound at residue Asp455. N-linked (GlcNAc...) asparagine glycans are attached at residues Asn461 and Asn478. Substrate contacts are provided by residues 519 to 520 (SG), Asn521, 536 to 538 (RAR), Tyr554, and 554 to 555 (YH). His555 is a binding site for Zn(2+). Asn615 carries an N-linked (GlcNAc...) asparagine glycan. The active-site Charge relay system is the Ser630. Asn640 carries an N-linked (GlcNAc...) asparagine glycan. Catalysis depends on charge relay system residues Asp668 and His691. 701–702 (KY) provides a ligand contact to substrate. An N-linked (GlcNAc...) asparagine glycan is attached at Asn722.

The protein belongs to the peptidase M28 family. M28B subfamily. Homodimer. The cofactor is Zn(2+). Expressed predominantly in the hippocampal region of the brain and in kidney. Lower levels in the ovary, testis and mandibular gland.

It is found in the cell membrane. The catalysed reaction is Release of an unsubstituted, C-terminal glutamyl residue, typically from Ac-Asp-Glu or folylpoly-gamma-glutamates.. With respect to regulation, the NAALADase and folate hydrolase activities are inhibited by quisqualic acid. Has both folate hydrolase and N-acetylated-alpha-linked-acidic dipeptidase (NAALADase) activity. Has a preference for tri-alpha-glutamate peptides. In the intestine, required for the uptake of folate. In the brain, modulates excitatory neurotransmission through the hydrolysis of the neuropeptide, N-aceylaspartylglutamate (NAAG), thereby releasing glutamate. Functionally, also exhibits a dipeptidyl-peptidase IV type activity. In vitro, cleaves Gly-Pro-AMC. This chain is Glutamate carboxypeptidase 2 (Folh1), found in Mus musculus (Mouse).